Here is a 318-residue protein sequence, read N- to C-terminus: Formimidoylglutamase (318 aa).

Residues H130, D155, H157, D159, D246, and D248 each coordinate Mn(2+).

The protein belongs to the arginase family. The cofactor is Mn(2+).

It carries out the reaction N-formimidoyl-L-glutamate + H2O = formamide + L-glutamate. The protein operates within amino-acid degradation; L-histidine degradation into L-glutamate; L-glutamate from N-formimidoyl-L-glutamate (hydrolase route): step 1/1. In terms of biological role, catalyzes the conversion of N-formimidoyl-L-glutamate to L-glutamate and formamide. The protein is Formimidoylglutamase of Klebsiella pneumoniae subsp. pneumoniae (strain ATCC 700721 / MGH 78578).